The following is a 261-amino-acid chain: Cytochrome c oxidase subunit 3 (261 aa).

The Mitochondrial matrix segment spans residues methionine 1–proline 15. A helical membrane pass occupies residues tryptophan 16–tryptophan 34. Residues phenylalanine 35–methionine 40 are Mitochondrial intermembrane-facing. Residues serine 41–threonine 66 traverse the membrane as a helical segment. Over phenylalanine 67–threonine 72 the chain is Mitochondrial matrix. Residues proline 73–serine 105 traverse the membrane as a helical segment. Topologically, residues leucine 106–glutamate 128 are mitochondrial intermembrane. The helical transmembrane segment at valine 129 to methionine 152 threads the bilayer. The Mitochondrial matrix portion of the chain corresponds to glutamate 153–asparagine 155. Residues arginine 156–glutamate 183 form a helical membrane-spanning segment. The Mitochondrial intermembrane portion of the chain corresponds to threonine 184–aspartate 190. A helical membrane pass occupies residues glycine 191–leucine 223. At tyrosine 224–histidine 232 the chain is on the mitochondrial matrix side. The chain crosses the membrane as a helical span at residues phenylalanine 233–isoleucine 256. Residues tyrosine 257 to serine 261 are Mitochondrial intermembrane-facing.

The protein belongs to the cytochrome c oxidase subunit 3 family. In terms of assembly, component of the cytochrome c oxidase (complex IV, CIV), a multisubunit enzyme composed of 14 subunits. The complex is composed of a catalytic core of 3 subunits MT-CO1, MT-CO2 and MT-CO3, encoded in the mitochondrial DNA, and 11 supernumerary subunits COX4I, COX5A, COX5B, COX6A, COX6B, COX6C, COX7A, COX7B, COX7C, COX8 and NDUFA4, which are encoded in the nuclear genome. The complex exists as a monomer or a dimer and forms supercomplexes (SCs) in the inner mitochondrial membrane with NADH-ubiquinone oxidoreductase (complex I, CI) and ubiquinol-cytochrome c oxidoreductase (cytochrome b-c1 complex, complex III, CIII), resulting in different assemblies (supercomplex SCI(1)III(2)IV(1) and megacomplex MCI(2)III(2)IV(2)).

The protein localises to the mitochondrion inner membrane. The enzyme catalyses 4 Fe(II)-[cytochrome c] + O2 + 8 H(+)(in) = 4 Fe(III)-[cytochrome c] + 2 H2O + 4 H(+)(out). Its function is as follows. Component of the cytochrome c oxidase, the last enzyme in the mitochondrial electron transport chain which drives oxidative phosphorylation. The respiratory chain contains 3 multisubunit complexes succinate dehydrogenase (complex II, CII), ubiquinol-cytochrome c oxidoreductase (cytochrome b-c1 complex, complex III, CIII) and cytochrome c oxidase (complex IV, CIV), that cooperate to transfer electrons derived from NADH and succinate to molecular oxygen, creating an electrochemical gradient over the inner membrane that drives transmembrane transport and the ATP synthase. Cytochrome c oxidase is the component of the respiratory chain that catalyzes the reduction of oxygen to water. Electrons originating from reduced cytochrome c in the intermembrane space (IMS) are transferred via the dinuclear copper A center (CU(A)) of subunit 2 and heme A of subunit 1 to the active site in subunit 1, a binuclear center (BNC) formed by heme A3 and copper B (CU(B)). The BNC reduces molecular oxygen to 2 water molecules using 4 electrons from cytochrome c in the IMS and 4 protons from the mitochondrial matrix. The protein is Cytochrome c oxidase subunit 3 (MT-CO3) of Canis lupus (Gray wolf).